A 508-amino-acid polypeptide reads, in one-letter code: Photosystem II CP47 reaction center protein (508 aa).

6 consecutive transmembrane segments (helical) span residues 21–36 (SVHIMHTALVAGWAGS), 101–115 (IVFSGLCFLAAIWHW), 140–156 (GIHLFLSGVACFGFGAF), 203–218 (IAAGTLGILAGLFHLS), 237–252 (VLSSSIAAVFFAAFVV), and 457–472 (SFALLFFFGHIWHGAR).

Belongs to the PsbB/PsbC family. PsbB subfamily. PSII is composed of 1 copy each of membrane proteins PsbA, PsbB, PsbC, PsbD, PsbE, PsbF, PsbH, PsbI, PsbJ, PsbK, PsbL, PsbM, PsbT, PsbX, PsbY, PsbZ, Psb30/Ycf12, at least 3 peripheral proteins of the oxygen-evolving complex and a large number of cofactors. It forms dimeric complexes. Requires Binds multiple chlorophylls. PSII binds additional chlorophylls, carotenoids and specific lipids. as cofactor.

The protein resides in the plastid. The protein localises to the chloroplast thylakoid membrane. One of the components of the core complex of photosystem II (PSII). It binds chlorophyll and helps catalyze the primary light-induced photochemical processes of PSII. PSII is a light-driven water:plastoquinone oxidoreductase, using light energy to abstract electrons from H(2)O, generating O(2) and a proton gradient subsequently used for ATP formation. This is Photosystem II CP47 reaction center protein from Gossypium barbadense (Sea Island cotton).